Consider the following 163-residue polypeptide: Campylobacter invasion antigen D (163 aa).

The MKD signature appears at 135 to 145 (KKDDLENRLNL).

In terms of assembly, interacts with the host cell protein IQGAP1, thus displacing RACGAP1 from the IQGAP1 complex.

The protein localises to the secreted. Its subcellular location is the host cytoplasm. The protein resides in the host cytosol. Functionally, effector protein required for the development of acute disease and colon inflammatory lesions. Required for maximal host cell invasion and maximal secretion of the inflammatory chemokine interleukin-8 (IL-8) from host cells. Acts by activating the host MAP kinase signaling pathways ERK-1/2 and p38 to promote both cellular invasion and the release of IL-8. CiaD mediated activation of ERK-1/2 leads to the phosphorylation of host cortactin (CTTN) on serine residues and association of cortactin with N-WASP, promoting actin cytoskeleton rearrangement, membrane ruffling and host cell invasion. In addition, maximal host cell invasion requires interaction with the host cell protein IQGAP1, a Ras GTPase-activating-like protein. Binding to IQGAP1 facilitates the activation of the Rho GTPases RAC1 and CDC42, further promoting actin reorganization and bacterial uptake. CiaD promotes RAC1 activation by excluding RACGAP1 from the IQGAP1 complex, preventing the deactivation of RAC1. CiaD probably activates ERK signaling upstream or independently of IQGAP1. This chain is Campylobacter invasion antigen D, found in Campylobacter jejuni subsp. jejuni serotype O:2 (strain ATCC 700819 / NCTC 11168).